The sequence spans 256 residues: tRNA pseudouridine synthase A (256 aa).

D55 functions as the Nucleophile in the catalytic mechanism. Y113 serves as a coordination point for substrate.

Belongs to the tRNA pseudouridine synthase TruA family. As to quaternary structure, homodimer.

The catalysed reaction is uridine(38/39/40) in tRNA = pseudouridine(38/39/40) in tRNA. Functionally, formation of pseudouridine at positions 38, 39 and 40 in the anticodon stem and loop of transfer RNAs. The sequence is that of tRNA pseudouridine synthase A from Ligilactobacillus salivarius (strain UCC118) (Lactobacillus salivarius).